A 139-amino-acid polypeptide reads, in one-letter code: Heat shock protein homolog C338.06c (139 aa).

In terms of domain architecture, sHSP spans 27–139; the sequence is AWLSCWGPAL…EFTTRIVEIQ (113 aa).

Belongs to the small heat shock protein (HSP20) family.

The protein resides in the mitochondrion. This chain is Heat shock protein homolog C338.06c, found in Schizosaccharomyces pombe (strain 972 / ATCC 24843) (Fission yeast).